Reading from the N-terminus, the 282-residue chain is Lipoyl synthase (282 aa).

Residues Cys-37, Cys-42, Cys-48, Cys-63, Cys-67, Cys-70, and Ser-275 each coordinate [4Fe-4S] cluster. Positions Trp-49–Arg-264 constitute a Radical SAM core domain.

It belongs to the radical SAM superfamily. Lipoyl synthase family. It depends on [4Fe-4S] cluster as a cofactor.

It is found in the cytoplasm. The catalysed reaction is [[Fe-S] cluster scaffold protein carrying a second [4Fe-4S](2+) cluster] + N(6)-octanoyl-L-lysyl-[protein] + 2 oxidized [2Fe-2S]-[ferredoxin] + 2 S-adenosyl-L-methionine + 4 H(+) = [[Fe-S] cluster scaffold protein] + N(6)-[(R)-dihydrolipoyl]-L-lysyl-[protein] + 4 Fe(3+) + 2 hydrogen sulfide + 2 5'-deoxyadenosine + 2 L-methionine + 2 reduced [2Fe-2S]-[ferredoxin]. Its pathway is protein modification; protein lipoylation via endogenous pathway; protein N(6)-(lipoyl)lysine from octanoyl-[acyl-carrier-protein]: step 2/2. In terms of biological role, catalyzes the radical-mediated insertion of two sulfur atoms into the C-6 and C-8 positions of the octanoyl moiety bound to the lipoyl domains of lipoate-dependent enzymes, thereby converting the octanoylated domains into lipoylated derivatives. The protein is Lipoyl synthase of Porphyromonas gingivalis (strain ATCC 33277 / DSM 20709 / CIP 103683 / JCM 12257 / NCTC 11834 / 2561).